Reading from the N-terminus, the 649-residue chain is Acetyl-coenzyme A synthetase (649 aa).

CoA-binding positions include Arg-190–Arg-193 and Thr-310. ATP is bound by residues Gly-386–Pro-388, Asp-410–Thr-415, Asp-499, and Arg-514. Ser-522 lines the CoA pocket. Arg-525 contributes to the ATP binding site. The Mg(2+) site is built by Val-536, His-538, and Val-541. Arg-583 contributes to the CoA binding site. Lys-608 carries the post-translational modification N6-acetyllysine.

It belongs to the ATP-dependent AMP-binding enzyme family. The cofactor is Mg(2+). In terms of processing, acetylated. Deacetylation by the SIR2-homolog deacetylase activates the enzyme.

The enzyme catalyses acetate + ATP + CoA = acetyl-CoA + AMP + diphosphate. Catalyzes the conversion of acetate into acetyl-CoA (AcCoA), an essential intermediate at the junction of anabolic and catabolic pathways. AcsA undergoes a two-step reaction. In the first half reaction, AcsA combines acetate with ATP to form acetyl-adenylate (AcAMP) intermediate. In the second half reaction, it can then transfer the acetyl group from AcAMP to the sulfhydryl group of CoA, forming the product AcCoA. In Methylorubrum extorquens (strain PA1) (Methylobacterium extorquens), this protein is Acetyl-coenzyme A synthetase.